Reading from the N-terminus, the 394-residue chain is Imidazolonepropionase (394 aa).

Fe(3+) contacts are provided by His-61 and His-63. His-61 and His-63 together coordinate Zn(2+). 4-imidazolone-5-propanoate-binding residues include Arg-70, Tyr-133, and His-164. An N-formimidoyl-L-glutamate-binding site is contributed by Tyr-133. His-225 contacts Fe(3+). His-225 serves as a coordination point for Zn(2+). Glu-228 lines the 4-imidazolone-5-propanoate pocket. Residue Asp-299 participates in Fe(3+) binding. Zn(2+) is bound at residue Asp-299.

This sequence belongs to the metallo-dependent hydrolases superfamily. HutI family. It depends on Zn(2+) as a cofactor. Requires Fe(3+) as cofactor.

The protein localises to the cytoplasm. It carries out the reaction 4-imidazolone-5-propanoate + H2O = N-formimidoyl-L-glutamate. It functions in the pathway amino-acid degradation; L-histidine degradation into L-glutamate; N-formimidoyl-L-glutamate from L-histidine: step 3/3. Catalyzes the hydrolytic cleavage of the carbon-nitrogen bond in imidazolone-5-propanoate to yield N-formimidoyl-L-glutamate. It is the third step in the universal histidine degradation pathway. The polypeptide is Imidazolonepropionase (Picrophilus torridus (strain ATCC 700027 / DSM 9790 / JCM 10055 / NBRC 100828 / KAW 2/3)).